A 580-amino-acid chain; its full sequence is Rap guanine nucleotide exchange factor 5 (580 aa).

In terms of domain architecture, N-terminal Ras-GEF spans Asp-67–Gly-200. The Ras-GEF domain maps to Asn-344–Arg-579.

In terms of tissue distribution, in the embryo, expressed in young neurons of the developing telencephalon, diencephalon and hindbrain. Not expressed in progenitor cells in the ventricular zone.

It is found in the nucleus. Its function is as follows. Guanine nucleotide exchange factor (GEF) for RAP1A, RAP2A and MRAS/M-Ras-GTP. Its association with MRAS inhibits Rap1 activation. This Rattus norvegicus (Rat) protein is Rap guanine nucleotide exchange factor 5 (Rapgef5).